The sequence spans 318 residues: Ribose-phosphate pyrophosphokinase 2 (318 aa).

96-101 (RQDKKD) is a binding site for ATP. 4 residues coordinate Mg(2+): Asp128, His130, Asp139, and Asp143. His130 serves as a coordination point for ATP. The interval 212–227 (KDRVAILVDDMADTCG) is binding of phosphoribosylpyrophosphate.

It belongs to the ribose-phosphate pyrophosphokinase family. In terms of assembly, homodimer. The active form is probably a hexamer composed of 3 homodimers. It depends on Mg(2+) as a cofactor.

The enzyme catalyses D-ribose 5-phosphate + ATP = 5-phospho-alpha-D-ribose 1-diphosphate + AMP + H(+). Its pathway is metabolic intermediate biosynthesis; 5-phospho-alpha-D-ribose 1-diphosphate biosynthesis; 5-phospho-alpha-D-ribose 1-diphosphate from D-ribose 5-phosphate (route I): step 1/1. Its activity is regulated as follows. Activated by magnesium and inorganic phosphate. Its function is as follows. Catalyzes the synthesis of phosphoribosylpyrophosphate (PRPP) that is essential for nucleotide synthesis. This chain is Ribose-phosphate pyrophosphokinase 2 (Prps2), found in Rattus norvegicus (Rat).